The chain runs to 123 residues: PTS system glucitol/sorbitol-specific EIIA component (123 aa).

Residues 3–116 form the PTS EIIA type-5 domain; that stretch reads VIYQTTITRI…PDDIAPGSVL (114 aa). Histidine 43 acts as the Tele-phosphohistidine intermediate in catalysis. At histidine 43 the chain carries Phosphohistidine; by HPr.

The protein resides in the cytoplasm. Functionally, the phosphoenolpyruvate-dependent sugar phosphotransferase system (sugar PTS), a major carbohydrate active transport system, catalyzes the phosphorylation of incoming sugar substrates concomitantly with their translocation across the cell membrane. The enzyme II complex composed of SrlA, SrlB and SrlE is involved in glucitol/sorbitol transport. It can also use D-mannitol. The chain is PTS system glucitol/sorbitol-specific EIIA component (srlB) from Escherichia coli (strain K12).